The chain runs to 155 residues: 6,7-dimethyl-8-ribityllumazine synthase (155 aa).

5-amino-6-(D-ribitylamino)uracil-binding positions include Trp24, 58-60 (AFE), and 82-84 (AVI). Residue 87–88 (GT) participates in (2S)-2-hydroxy-3-oxobutyl phosphate binding. His90 functions as the Proton donor in the catalytic mechanism. Residue Phe115 participates in 5-amino-6-(D-ribitylamino)uracil binding. Arg129 serves as a coordination point for (2S)-2-hydroxy-3-oxobutyl phosphate.

Belongs to the DMRL synthase family. As to quaternary structure, forms an icosahedral capsid composed of 60 subunits, arranged as a dodecamer of pentamers.

The catalysed reaction is (2S)-2-hydroxy-3-oxobutyl phosphate + 5-amino-6-(D-ribitylamino)uracil = 6,7-dimethyl-8-(1-D-ribityl)lumazine + phosphate + 2 H2O + H(+). It functions in the pathway cofactor biosynthesis; riboflavin biosynthesis; riboflavin from 2-hydroxy-3-oxobutyl phosphate and 5-amino-6-(D-ribitylamino)uracil: step 1/2. Functionally, catalyzes the formation of 6,7-dimethyl-8-ribityllumazine by condensation of 5-amino-6-(D-ribitylamino)uracil with 3,4-dihydroxy-2-butanone 4-phosphate. This is the penultimate step in the biosynthesis of riboflavin. This Saccharophagus degradans (strain 2-40 / ATCC 43961 / DSM 17024) protein is 6,7-dimethyl-8-ribityllumazine synthase.